The sequence spans 525 residues: Cytochrome P450 monooxygenase bsc2 (525 aa).

A helical transmembrane segment spans residues 12 to 32 (SLFILWLTTLLVSVLATAAYI). 2 N-linked (GlcNAc...) asparagine glycosylation sites follow: Asn-86 and Asn-317. Cys-456 contacts heme.

The protein belongs to the cytochrome P450 family. The cofactor is heme.

The protein resides in the membrane. Its pathway is mycotoxin biosynthesis. Functionally, cytochrome P450 monooxygenase; part of the gene cluster that mediates the biosynthesis of the diterpene glucoside brassicicene C. In the first step of the brassicicene C biosynthesis, the bifunctional diterpene synthase bsc8 that possesses both prenyl transferase and terpene cyclase activity, converts isopentenyl diphosphate and dimethylallyl diphosphate into geranylgeranyl diphosphate (GGDP) that is further converted into fusicocca-2,10(14)-diene, the first precursor for brassicicene C. Fusicocca-2,10(14)-diene is then substrate of cytochrome P450 monooxygenase bsc1 for hydroxylation at the C-8 position. Oxidation at C-16 position to aldehyde is then catalyzed by the cytochrome P450 monooyxygenase bsc7, yielding fusicocca-2,10(14)-diene-8-beta,16-diol. Follows the isomerization of the double bond and reduction of aldehyde to alcohol catalyzed by the short-chain dehydrogenase/reductase bsc3 to yield the diol compound fusicocca-1,10(14)-diene-8 beta,16-diol. The next step is the oxidation at the C-3 position of fusicocca-2,10(14)-diene-8-beta,16-diol catalyzed by the alpha-ketoglutarate dependent dioxygenase bsc9, to produce a triol compound. Methylation of the hydroxy group at position 16 is performed by the methyltransferase bsc6. 16-O-methylation is followed by oxidation at the C-13 position to ketone and an alkyl shift of the methyl group leads to brassicicene C. Although the probable acetyltransferase bsc4 is included in the gene cluster, no acetylation reactions are necessary for brassicicene C biosynthesis. However, the fact that brassicicene E, which is a structurally related compound having an acetoxy group at position 12, was previously isolated from another strain of A.brassicicola suggests that the ATCC 96836 strain might also produce a small amount of brassicicene E. This chain is Cytochrome P450 monooxygenase bsc2, found in Alternaria brassicicola (Dark leaf spot agent).